The following is a 140-amino-acid chain: Ribonuclease P protein subunit p20 (140 aa).

This sequence belongs to the histone-like Alba family. In terms of assembly, component of nuclear RNase P and RNase MRP complexes. RNase P consists of a catalytic RNA moiety and 10 different protein chains; POP1, POP4, POP5, POP7, RPP14, RPP21, RPP25, RPP30, RPP38 and RPP40. Within the RNase P complex, POP1, POP7 and RPP25 form the 'finger' subcomplex, POP5, RPP14, RPP40 and homodimeric RPP30 form the 'palm' subcomplex, and RPP21, POP4 and RPP38 form the 'wrist' subcomplex. All subunits of the RNase P complex interact with the catalytic RNA. Several subunits of RNase P are also part of the RNase MRP complex. RNase MRP consists of a catalytic RNA moiety and about 8 protein subunits; POP1, POP7, RPP25, RPP30, RPP38, RPP40 and possibly also POP4 and POP5. Interacts with SMN1. POP7 forms a heterodimer with RPP25 that binds to the P3 stem loop of the catalytic RNA.

The protein localises to the nucleus. It is found in the nucleolus. The protein resides in the cytoplasm. Its subcellular location is the cytoplasmic granule. Component of ribonuclease P, a ribonucleoprotein complex that generates mature tRNA molecules by cleaving their 5'-ends. Also a component of the MRP ribonuclease complex, which cleaves pre-rRNA sequences. This chain is Ribonuclease P protein subunit p20 (Pop7), found in Mus musculus (Mouse).